A 492-amino-acid chain; its full sequence is Ribose import ATP-binding protein RbsA (492 aa).

ABC transporter domains lie at 3–239 and 249–492; these read IEMK…VGRS and AEIR…TGGQ. 35-42 provides a ligand contact to ATP; the sequence is GENGAGKS.

Belongs to the ABC transporter superfamily. Ribose importer (TC 3.A.1.2.1) family. As to quaternary structure, the complex is composed of an ATP-binding protein (RbsA), two transmembrane proteins (RbsC) and a solute-binding protein (RbsB).

It is found in the cell membrane. It catalyses the reaction D-ribose(out) + ATP + H2O = D-ribose(in) + ADP + phosphate + H(+). In terms of biological role, part of the ABC transporter complex RbsABC involved in ribose import. Responsible for energy coupling to the transport system. The chain is Ribose import ATP-binding protein RbsA from Lactococcus lactis subsp. lactis (strain IL1403) (Streptococcus lactis).